Reading from the N-terminus, the 247-residue chain is Acidic leucine-rich nuclear phosphoprotein 32 family member A (247 aa).

Threonine 15 is modified (phosphothreonine). Serine 17 is subject to Phosphoserine. LRR repeat units follow at residues 18 to 41 (DVKE…TDEF), 43 to 64 (ELEF…PKLN), 65 to 87 (KLKK…AEKC), and 89 to 110 (NLKH…EPLK). Residues 123–161 (CEVTNLNAYRENVFKLLPQVMYLDGYDRDNKEAPDSDVE) form the LRRCT domain. The interval 150 to 172 (RDNKEAPDSDVEGYVEDDDEEDE) is necessary for tumor-suppressive function. A disordered region spans residues 150–247 (RDNKEAPDSD…EPDDEGQEDD (98 aa)). Acidic residues predominate over residues 157 to 230 (DSDVEGYVED…EDEEDAAEEE (74 aa)). Residues serine 158 and serine 202 each carry the phosphoserine modification. An interaction with E4F1 region spans residues 165–247 (EDDDEEDEDE…EPDDEGQEDD (83 aa)).

This sequence belongs to the ANP32 family. As to quaternary structure, component of the SET complex, composed of at least ANP32A, APEX1, HMGB2, NME1, SET and TREX1. Directly interacts with SET. Interacts with ATXN1/SCA1. Interacts with MAP1B. Interacts with ELAVL1. Part of the INHAT (inhibitor of histone acetyltransferases) complex. Interacts with E4F1. Phosphorylated on serine residues, at least in part by casein kinase 2/CK2. In terms of processing, some glutamate residues are glycylated by TTLL8. This modification occurs exclusively on glutamate residues and results in a glycine chain on the gamma-carboxyl group. In terms of tissue distribution, widely distributed in the central nervous system, with an abundant expression in the cerebellum.

It is found in the nucleus. Its subcellular location is the cytoplasm. It localises to the endoplasmic reticulum. Functionally, multifunctional protein that is involved in the regulation of many processes including tumor suppression, apoptosis, cell cycle progression or transcription. Promotes apoptosis by favouring the activation of caspase-9/CASP9 and allowing apoptosome formation. In addition, plays a role in the modulation of histone acetylation and transcription as part of the INHAT (inhibitor of histone acetyltransferases) complex. Inhibits the histone-acetyltranferase activity of EP300/CREBBP (CREB-binding protein) and EP300/CREBBP-associated factor by histone masking. Preferentially binds to unmodified histone H3 and sterically inhibiting its acetylation and phosphorylation leading to cell growth inhibition. Participates in other biochemical processes such as regulation of mRNA nuclear-to-cytoplasmic translocation and stability by its association with ELAVL1 (Hu-antigen R). Plays a role in E4F1-mediated transcriptional repression as well as inhibition of protein phosphatase 2A. The chain is Acidic leucine-rich nuclear phosphoprotein 32 family member A (Anp32a) from Rattus norvegicus (Rat).